The following is a 415-amino-acid chain: Esterase FrsA (415 aa).

It belongs to the FrsA family.

The catalysed reaction is a carboxylic ester + H2O = an alcohol + a carboxylate + H(+). In terms of biological role, catalyzes the hydrolysis of esters. This chain is Esterase FrsA, found in Vibrio cholerae serotype O1 (strain ATCC 39541 / Classical Ogawa 395 / O395).